The primary structure comprises 210 residues: Peptidyl-tRNA hydrolase (210 aa).

Tyr-30 lines the tRNA pocket. Residue His-35 is the Proton acceptor of the active site. Tyr-81, Asn-83, and Asn-129 together coordinate tRNA.

It belongs to the PTH family. Monomer.

The protein resides in the cytoplasm. It carries out the reaction an N-acyl-L-alpha-aminoacyl-tRNA + H2O = an N-acyl-L-amino acid + a tRNA + H(+). Hydrolyzes ribosome-free peptidyl-tRNAs (with 1 or more amino acids incorporated), which drop off the ribosome during protein synthesis, or as a result of ribosome stalling. Functionally, catalyzes the release of premature peptidyl moieties from peptidyl-tRNA molecules trapped in stalled 50S ribosomal subunits, and thus maintains levels of free tRNAs and 50S ribosomes. The sequence is that of Peptidyl-tRNA hydrolase from Bordetella petrii (strain ATCC BAA-461 / DSM 12804 / CCUG 43448).